The primary structure comprises 66 residues: Toxin Cll1 (66 aa).

The LCN-type CS-alpha/beta domain occupies 1 to 66; the sequence is KEGYLVNKST…TYPLPNKSCS (66 aa). Intrachain disulfides connect Cys-12–Cys-65, Cys-16–Cys-41, Cys-25–Cys-46, and Cys-29–Cys-48.

It belongs to the long (4 C-C) scorpion toxin superfamily. Sodium channel inhibitor family. Beta subfamily. In terms of tissue distribution, expressed by the venom gland.

Its subcellular location is the secreted. Beta toxin that binds site-4 of sodium channels (Nav) and reduces peak current (observed on Nav1.1/SCN1A, Nav1.2/SCN2A, Nav1.3/SCN3A, Nav1.4/SCN5A, Nav1.5/SCN4A, and Nav1.6/SCN8A (IC(50)=44.9 nM)), shifts the voltage of activation toward more negative potentials (observed on Nav1.6, Nav1.1 (weak), Nav1.2 (weak), and Nav1.7 (weak)), and induces resurgent currents at negative voltages following brief and strong depolarizations (observed on Nav1.6, Nav1.1 (weak), Nav1.2 (weak), and Nav1.4 (weak)). This toxin is only active on crustaceans. The sequence is that of Toxin Cll1 from Centruroides limpidus (Mexican scorpion).